A 109-amino-acid chain; its full sequence is Putative double-stranded DNA mimic protein plu2488 (109 aa).

Belongs to the putative dsDNA mimic protein family.

May act as a double-stranded DNA (dsDNA) mimic. Probably regulates the activity of a dsDNA-binding protein. The sequence is that of Putative double-stranded DNA mimic protein plu2488 from Photorhabdus laumondii subsp. laumondii (strain DSM 15139 / CIP 105565 / TT01) (Photorhabdus luminescens subsp. laumondii).